A 522-amino-acid chain; its full sequence is Thiamine biosynthetic bifunctional enzyme TH1, chloroplastic (522 aa).

Residues 1–36 (MNSLGGIRSWPANWRSTTASMTTTESVRKVPQVLTV) constitute a chloroplast transit peptide. 4-amino-2-methyl-5-(diphosphooxymethyl)pyrimidine is bound by residues 345–349 (QLREK) and N377. 2 residues coordinate Mg(2+): D378 and D397. Position 416 (S416) interacts with 4-amino-2-methyl-5-(diphosphooxymethyl)pyrimidine. 442-444 (TNT) contributes to the 2-[(2R,5Z)-2-carboxy-4-methylthiazol-5(2H)-ylidene]ethyl phosphate binding site. K445 lines the 4-amino-2-methyl-5-(diphosphooxymethyl)pyrimidine pocket. 2-[(2R,5Z)-2-carboxy-4-methylthiazol-5(2H)-ylidene]ethyl phosphate is bound by residues G472 and 495–496 (VS).

Belongs to the thiamine-phosphate synthase family. Requires Mg(2+) as cofactor.

It localises to the plastid. It is found in the chloroplast. It carries out the reaction 2-[(2R,5Z)-2-carboxy-4-methylthiazol-5(2H)-ylidene]ethyl phosphate + 4-amino-2-methyl-5-(diphosphooxymethyl)pyrimidine + 2 H(+) = thiamine phosphate + CO2 + diphosphate. The catalysed reaction is 2-(2-carboxy-4-methylthiazol-5-yl)ethyl phosphate + 4-amino-2-methyl-5-(diphosphooxymethyl)pyrimidine + 2 H(+) = thiamine phosphate + CO2 + diphosphate. The enzyme catalyses 4-methyl-5-(2-phosphooxyethyl)-thiazole + 4-amino-2-methyl-5-(diphosphooxymethyl)pyrimidine + H(+) = thiamine phosphate + diphosphate. It catalyses the reaction 4-amino-5-hydroxymethyl-2-methylpyrimidine + ATP = 4-amino-2-methyl-5-(phosphooxymethyl)pyrimidine + ADP + H(+). Its pathway is cofactor biosynthesis; thiamine diphosphate biosynthesis; thiamine phosphate from 4-amino-2-methyl-5-diphosphomethylpyrimidine and 4-methyl-5-(2-phosphoethyl)-thiazole: step 1/1. The protein operates within cofactor biosynthesis; thiamine diphosphate biosynthesis; 4-amino-2-methyl-5-diphosphomethylpyrimidine from 5-amino-1-(5-phospho-D-ribosyl)imidazole: step 2/3. Essential for thiamine biosynthesis. Bifunctional enzyme that catalyzes the phosphorylation of hydroxymethylpyrimidine phosphate (HMP-P) to HMP-PP and condenses 4-methyl-5-(beta-hydroxyethyl)thiazole monophosphate (THZ-P) and 2-methyl-4-amino-5-hydroxymethyl pyrimidine pyrophosphate (HMP-PP) to form thiamine monophosphate (TMP). The chain is Thiamine biosynthetic bifunctional enzyme TH1, chloroplastic (TH1) from Arabidopsis thaliana (Mouse-ear cress).